A 1381-amino-acid chain; its full sequence is Hepatocyte growth factor receptor (1381 aa).

Residues 1 to 24 form the signal peptide; that stretch reads MKAPAVLAPGILVLLFTLVQRSNG. Over 25-932 the chain is Extracellular; it reads ECKEALAKSE…VIVQPDQNFT (908 aa). The 489-residue stretch at 27–515 folds into the Sema domain; sequence KEALAKSEMN…TGKKITKIPL (489 aa). Asn45 carries N-linked (GlcNAc...) asparagine glycosylation. Cystine bridges form between Cys95–Cys101, Cys98–Cys160, Cys133–Cys141, and Cys172–Cys175. A glycan (N-linked (GlcNAc...) asparagine) is linked at Asn106. A glycan (N-linked (GlcNAc...) asparagine) is linked at Asn149. N-linked (GlcNAc...) asparagine glycosylation occurs at Asn202. 2 cysteine pairs are disulfide-bonded: Cys298/Cys363 and Cys385/Cys397. Residues Asn399 and Asn405 are each glycosylated (N-linked (GlcNAc...) asparagine). 4 disulfide bridges follow: Cys520-Cys538, Cys526-Cys561, Cys529-Cys545, and Cys541-Cys551. 3 IPT/TIG domains span residues 563–655, 657–739, and 742–836; these read PAIY…FSYV, PIIT…FSYR, and PIVY…LIYV. A glycan (O-linked (Man) threonine) is linked at Thr582. 2 N-linked (GlcNAc...) asparagine glycosylation sites follow: Asn607 and Asn635. 2 O-linked (Man) threonine glycosylation sites follow: Thr676 and Thr761. Asn785, Asn879, and Asn930 each carry an N-linked (GlcNAc...) asparagine glycan. Residues 933 to 955 form a helical membrane-spanning segment; the sequence is GLIAGVVSISIALLLLLGLFLWL. The Cytoplasmic segment spans residues 956–1381; the sequence is KKRKQIKDLG…EDNADDEVDT (426 aa). Ser966 is subject to Phosphoserine. Thr977 bears the Phosphothreonine mark. 3 positions are modified to phosphoserine: Ser990, Ser997, and Ser1000. Phosphotyrosine is present on Tyr1003. The Protein kinase domain maps to 1078-1345; sequence VHFNEVIGRG…RISAIFSTFI (268 aa). ATP-binding positions include 1084-1092 and Lys1110; that span reads IGRGHFGCV. Asp1204 functions as the Proton acceptor in the catalytic mechanism. The interaction with RANBP9 stretch occupies residues 1212-1381; that stretch reads LDEKFTVKVA…EDNADDEVDT (170 aa). The residue at position 1230 (Tyr1230) is a Phosphotyrosine. Tyr1234 and Tyr1235 each carry phosphotyrosine; by autocatalysis. Thr1289 is modified (phosphothreonine). An interaction with MUC20 region spans residues 1320–1359; that stretch reads WHPKAEMRPSFSELVSRISAIFSTFIGEHYVHVNATYVNV. Tyr1349 and Tyr1356 each carry phosphotyrosine; by autocatalysis. Tyr1365 carries the phosphotyrosine modification.

It belongs to the protein kinase superfamily. Tyr protein kinase family. As to quaternary structure, heterodimer made of an alpha chain (50 kDa) and a beta chain (145 kDa) which are disulfide linked. Binds PLXNB1. Interacts when phosphorylated with downstream effectors including STAT3, PIK3R1, SRC, PCLG1, GRB2 and GAB1. Interacts with SPSB1, SPSB2 and SPSB4. Interacts with INPP5D/SHIP1. When phosphorylated at Tyr-1356, interacts with INPPL1/SHIP2. Interacts with RANBP9 and RANBP10, as well as SPSB1, SPSB2, SPSB3 and SPSB4. SPSB1 binding occurs in the presence and in the absence of HGF, however HGF treatment has a positive effect on this interaction. Interacts with MUC20; prevents interaction with GRB2 and suppresses hepatocyte growth factor-induced cell proliferation. Interacts with GRB10. Interacts with PTPN1 and PTPN2. Interacts with HSP90AA1 and HSP90AB1; the interaction suppresses MET kinase activity. Interacts with tensin TNS3. Interacts (when phosphorylated) with tensin TNS4 (via SH2 domain); the interaction increases MET protein stability by inhibiting MET endocytosis and subsequent lysosomal degradation. Autophosphorylated in response to ligand binding on Tyr-1234 and Tyr-1235 in the kinase domain leading to further phosphorylation of Tyr-1349 and Tyr-1356 in the C-terminal multifunctional docking site. Dephosphorylated by PTPRJ at Tyr-1349 and Tyr-1365. Dephosphorylated by PTPN1 and PTPN2. In terms of processing, ubiquitinated. Ubiquitination by CBL regulates the receptor stability and activity through proteasomal degradation. Post-translationally, O-mannosylation of IPT/TIG domains by TMEM260 is required for protein maturation. O-mannosylated residues are composed of single mannose glycans that are not elongated or modified.

The protein resides in the membrane. It catalyses the reaction L-tyrosyl-[protein] + ATP = O-phospho-L-tyrosyl-[protein] + ADP + H(+). With respect to regulation, in its inactive state, the C-terminal tail interacts with the catalytic domain and inhibits the kinase activity. Upon ligand binding, the C-terminal tail is displaced and becomes phosphorylated, thus increasing the kinase activity. In terms of biological role, receptor tyrosine kinase that transduces signals from the extracellular matrix into the cytoplasm by binding to hepatocyte growth factor/HGF ligand. Regulates many physiological processes including proliferation, scattering, morphogenesis and survival. Ligand binding at the cell surface induces autophosphorylation of MET on its intracellular domain that provides docking sites for downstream signaling molecules. Following activation by ligand, interacts with the PI3-kinase subunit PIK3R1, PLCG1, SRC, GRB2, STAT3 or the adapter GAB1. Recruitment of these downstream effectors by MET leads to the activation of several signaling cascades including the RAS-ERK, PI3 kinase-AKT, or PLCgamma-PKC. The RAS-ERK activation is associated with the morphogenetic effects while PI3K/AKT coordinates prosurvival effects. During embryonic development, MET signaling plays a role in gastrulation, development and migration of muscles and neuronal precursors, angiogenesis and kidney formation. In adults, participates in wound healing as well as organ regeneration and tissue remodeling. Also promotes differentiation and proliferation of hematopoietic cells. The protein is Hepatocyte growth factor receptor (MET) of Colobus guereza (Mantled guereza).